The following is a 79-amino-acid chain: Pulmonary surfactant-associated protein B (79 aa).

One can recognise a Saposin B-type domain in the interval 4 to 79 (PLPFCWLCRT…VCGLVLRCSS (76 aa)). 3 cysteine pairs are disulfide-bonded: Cys8–Cys77, Cys11–Cys71, and Cys35–Cys46.

Homodimer; disulfide-linked.

It localises to the secreted. The protein resides in the extracellular space. It is found in the surface film. Pulmonary surfactant-associated proteins promote alveolar stability by lowering the surface tension at the air-liquid interface in the peripheral air spaces. SP-B increases the collapse pressure of palmitic acid to nearly 70 millinewtons per meter. The sequence is that of Pulmonary surfactant-associated protein B (SFTPB) from Sus scrofa (Pig).